A 335-amino-acid chain; its full sequence is Glycerol-3-phosphate dehydrogenase [NAD(P)+] (335 aa).

4 residues coordinate NADPH: Ser-15, Tyr-16, His-36, and Lys-110. Sn-glycerol 3-phosphate contacts are provided by Lys-110, Gly-139, and Thr-141. Ala-143 contacts NADPH. The sn-glycerol 3-phosphate site is built by Lys-195, Asp-248, Ser-258, Arg-259, and Asn-260. Lys-195 functions as the Proton acceptor in the catalytic mechanism. NADPH is bound at residue Arg-259. Val-283 and Glu-285 together coordinate NADPH.

Belongs to the NAD-dependent glycerol-3-phosphate dehydrogenase family.

The protein resides in the cytoplasm. It catalyses the reaction sn-glycerol 3-phosphate + NAD(+) = dihydroxyacetone phosphate + NADH + H(+). The catalysed reaction is sn-glycerol 3-phosphate + NADP(+) = dihydroxyacetone phosphate + NADPH + H(+). It participates in membrane lipid metabolism; glycerophospholipid metabolism. Functionally, catalyzes the reduction of the glycolytic intermediate dihydroxyacetone phosphate (DHAP) to sn-glycerol 3-phosphate (G3P), the key precursor for phospholipid synthesis. In Mannheimia succiniciproducens (strain KCTC 0769BP / MBEL55E), this protein is Glycerol-3-phosphate dehydrogenase [NAD(P)+].